The sequence spans 281 residues: CCAAT/enhancer-binding protein epsilon (281 aa).

The interval 1 to 30 is disordered; it reads MSHGTYYECEPRAGQQPLEFSGARAGPGEL. Lys121 participates in a covalent cross-link: Glycyl lysine isopeptide (Lys-Gly) (interchain with G-Cter in SUMO2). Ser181 carries the post-translational modification Phosphoserine. The bZIP domain occupies 204-267; sequence SLEYRLRRER…DTLRNLFRQI (64 aa). Residues 208-228 form a basic motif region; the sequence is RLRRERNNIAVRKSRDKAKRR. Positions 230-237 are leucine-zipper; that stretch reads LETQQKVL.

The protein belongs to the bZIP family. C/EBP subfamily. In terms of assembly, binds DNA as a homodimer and as a heterodimer. Can form stable heterodimers with CEBPA, CEBPB and CEBPD. Interacts with GATA1 and SPI1. Interacts with SMARCD2. Post-translationally, phosphorylated.

The protein resides in the nucleus. Its function is as follows. Transcriptional activator. C/EBP are DNA-binding proteins that recognize two different motifs: the CCAAT homology common to many promoters and the enhanced core homology common to many enhancers. Required for the promyelocyte-myelocyte transition in myeloid differentiation. This chain is CCAAT/enhancer-binding protein epsilon (CEBPE), found in Ovis aries (Sheep).